Reading from the N-terminus, the 470-residue chain is Uronate isomerase (470 aa).

This sequence belongs to the metallo-dependent hydrolases superfamily. Uronate isomerase family.

It catalyses the reaction D-glucuronate = D-fructuronate. The enzyme catalyses aldehydo-D-galacturonate = keto-D-tagaturonate. It participates in carbohydrate metabolism; pentose and glucuronate interconversion. The protein is Uronate isomerase of Cutibacterium acnes (strain DSM 16379 / KPA171202) (Propionibacterium acnes).